The sequence spans 377 residues: D-alanine--D-alanine ligase (377 aa).

An ATP-grasp domain is found at 140–349 (KELLTVNGIR…NAKLVDMLID (210 aa)). An ATP-binding site is contributed by 170 to 225 (VAELGNIVFVKAANQGSSVGISRVTNAEEYTEALSDSFQYDYKVLIEEAVNGAREL). Positions 303, 316, and 318 each coordinate Mg(2+).

Belongs to the D-alanine--D-alanine ligase family. Requires Mg(2+) as cofactor. Mn(2+) serves as cofactor.

It localises to the cytoplasm. It carries out the reaction 2 D-alanine + ATP = D-alanyl-D-alanine + ADP + phosphate + H(+). Its pathway is cell wall biogenesis; peptidoglycan biosynthesis. Its function is as follows. Cell wall formation. In Leuconostoc mesenteroides subsp. mesenteroides (strain ATCC 8293 / DSM 20343 / BCRC 11652 / CCM 1803 / JCM 6124 / NCDO 523 / NBRC 100496 / NCIMB 8023 / NCTC 12954 / NRRL B-1118 / 37Y), this protein is D-alanine--D-alanine ligase.